The primary structure comprises 391 residues: Ferrochelatase (391 aa).

The Fe cation site is built by His-196 and Glu-281.

The protein belongs to the ferrochelatase family.

The protein localises to the cytoplasm. The enzyme catalyses heme b + 2 H(+) = protoporphyrin IX + Fe(2+). The protein operates within porphyrin-containing compound metabolism; protoheme biosynthesis; protoheme from protoporphyrin-IX: step 1/1. In terms of biological role, catalyzes the ferrous insertion into protoporphyrin IX. In Prochlorococcus marinus (strain MIT 9211), this protein is Ferrochelatase.